A 187-amino-acid polypeptide reads, in one-letter code: Potassium-transporting ATPase KdpC subunit (187 aa).

Residues 10 to 30 (LVAATMLICVAGYSAAVWAVG) traverse the membrane as a helical segment.

This sequence belongs to the KdpC family. As to quaternary structure, the system is composed of three essential subunits: KdpA, KdpB and KdpC.

It localises to the cell inner membrane. Part of the high-affinity ATP-driven potassium transport (or Kdp) system, which catalyzes the hydrolysis of ATP coupled with the electrogenic transport of potassium into the cytoplasm. This subunit acts as a catalytic chaperone that increases the ATP-binding affinity of the ATP-hydrolyzing subunit KdpB by the formation of a transient KdpB/KdpC/ATP ternary complex. The sequence is that of Potassium-transporting ATPase KdpC subunit from Parvibaculum lavamentivorans (strain DS-1 / DSM 13023 / NCIMB 13966).